A 486-amino-acid chain; its full sequence is mRNA cap guanine-N(7) methyltransferase (486 aa).

The interval 1–92 is disordered; that stretch reads MAGGADLDEP…ADRKAARERA (92 aa). Basic and acidic residues-rich tracts occupy residues 9 to 28, 35 to 54, and 82 to 92; these read EPPR…DSTH, VPRD…EPAR, and EADRKAARERA. The region spanning 135 to 486 is the mRNA cap 0 methyltransferase domain; the sequence is SRIKGLRSFN…FYVGFCFYKV (352 aa). MRNA is bound at residue 144–145; it reads NN. Residues lysine 148, glycine 177, aspartate 201, aspartate 247, 281–283, and tyrosine 286 contribute to the S-adenosyl-L-methionine site; that span reads MFC. The span at 333–351 shows a compositional bias: basic and acidic residues; it reads VEMKKKQAEAGDGSKKDDG. Residues 333 to 365 form a disordered region; it reads VEMKKKQAEAGDGSKKDDGGDAEEGELDEPEVE. Residues 352–363 are compositionally biased toward acidic residues; that stretch reads GDAEEGELDEPE.

Belongs to the class I-like SAM-binding methyltransferase superfamily. mRNA cap 0 methyltransferase family.

The protein resides in the nucleus. It catalyses the reaction a 5'-end (5'-triphosphoguanosine)-ribonucleoside in mRNA + S-adenosyl-L-methionine = a 5'-end (N(7)-methyl 5'-triphosphoguanosine)-ribonucleoside in mRNA + S-adenosyl-L-homocysteine. Responsible for methylating the 5'-cap structure of mRNAs. The protein is mRNA cap guanine-N(7) methyltransferase (ABD1) of Pyricularia oryzae (strain 70-15 / ATCC MYA-4617 / FGSC 8958) (Rice blast fungus).